Reading from the N-terminus, the 354-residue chain is Putative ankyrin repeat protein L284 (354 aa).

3 ANK repeats span residues 201–230 (ILDDILTLIIKSGNVSAFKTLINIIGLSND), 253–284 (SRYPQLYLESSIINGRTDIVDNLVKKGSNPIV), and 286–314 (LHKAAECAQFDIIWNLSENSLINQNDIDI).

In Acanthamoeba polyphaga (Amoeba), this protein is Putative ankyrin repeat protein L284.